Here is a 113-residue protein sequence, read N- to C-terminus: Mitochondrial import inner membrane translocase subunit PAM16 like 1 (113 aa).

Residues 1–48 (MAARVLASVIVMGSGIIARACTQAYRQALANASKTGVAHEATQTIKRG) constitute a mitochondrion transit peptide. Residues 55–104 (EARQILGVTEKSSWDEILKKYDTLFERNAQNGSFYLQSKVHRAKECLETA) form a J-like region.

Belongs to the TIM16/PAM16 family. Expressed at low levels in seedlings, rosettes and inflorescence.

Its subcellular location is the mitochondrion inner membrane. Functionally, regulates ATP-dependent protein translocation into the mitochondrial matrix. The polypeptide is Mitochondrial import inner membrane translocase subunit PAM16 like 1 (Arabidopsis thaliana (Mouse-ear cress)).